The following is a 216-amino-acid chain: Probable inactive E3 ubiquitin-protein ligase SINAT6 (216 aa).

Residues 5 to 74 form an SIAH-type zinc finger; sequence INDLQVESRV…LLLHLRNDHN (70 aa).

It belongs to the SINA (Seven in absentia) family. In terms of assembly, homodimer. Interacts with SINAT1, SINAT2, SINAT3, SINAT4 and SINAT5. Interacts with ATG6 and TRAF1A. As to expression, expressed in roots, rosette leaves, cauline leaves, guard cells and flowers.

It localises to the cytoplasm. The protein resides in the nucleus. Its function is as follows. Probable inactive E3 ubiquitin-protein ligase that plays a role in regulation of autophagy. Upon starvation, involved in maintaining ATG6 homeostasis by competitively associating with ATG6, a component of the autophagosome complex. Acts as a positive regulator of drought stress response. Functions as a positive regulator of abscisic acid-mediated stomatal closure. The polypeptide is Probable inactive E3 ubiquitin-protein ligase SINAT6 (Arabidopsis thaliana (Mouse-ear cress)).